The chain runs to 406 residues: Synaptic vesicle membrane protein VAT-1 homolog (406 aa).

A disordered region spans residues 1 to 57 (MSAEREAAEAATVAAATEAGAETGTGAGEGAPSQPPTVEVASDPQPPPAPEASASAS). Ser2 is modified (N-acetylserine). Phosphoserine is present on Ser2. The segment covering 9–22 (EAATVAAATEAGAE) has biased composition (low complexity). Ser33 and Ser42 each carry phosphoserine.

This sequence belongs to the zinc-containing alcohol dehydrogenase family. Quinone oxidoreductase subfamily.

The protein localises to the cytoplasm. It localises to the mitochondrion outer membrane. Plays a part in calcium-regulated keratinocyte activation in epidermal repair mechanisms. Has no effect on cell proliferation. Possesses ATPase activity. Negatively regulates mitochondrial fusion in cooperation with mitofusin proteins (MFN1-2). This is Synaptic vesicle membrane protein VAT-1 homolog (Vat1) from Mus musculus (Mouse).